A 446-amino-acid chain; its full sequence is MTEQKRKLEKLTGVKGMNDILPQDAGLWEFFEATVKSLLRAYGYQNIRTPIVEHTQLFTRGIGEVTDIVEKEMYSFVDALNGENLTLRPENTAAVVRAAIEHNMLYDGPKRLWYLGPMFRHERPQRGRYRQFHQVGVEALGFAGPDADAEIIMMCQRLWDDLGLTGIKLEINSLGLAEERAAHRVELIKYLEQHVDKLDDDAQRRLYTNPLRVLDTKNPALQEIVRNAPQLIDFLGDVSRAHFDGLQRLLKANNLPFTINPRLVRGLDYYNLTVFEWVTDKLGAQGTVAAGGRYDPLIEQLGGKPTAACGWAMGVERILELLKEEHLVPEQEGVDVYVVHQGDAAREQAFIVAERLRDTGLDVILHCSADGAGASFKSQMKRADASGAAFAVILGEDEVANGTVSVKPLRGTGAEGEKNVQQSVPVESLTEFLINAMVATAEDGDD.

The protein belongs to the class-II aminoacyl-tRNA synthetase family. As to quaternary structure, homodimer.

The protein resides in the cytoplasm. The catalysed reaction is tRNA(His) + L-histidine + ATP = L-histidyl-tRNA(His) + AMP + diphosphate + H(+). This chain is Histidine--tRNA ligase, found in Burkholderia pseudomallei (strain 668).